The primary structure comprises 319 residues: MNFNINILGTGGTRPLHNRYLTSVLIEYHGESFLFDCGEATQMSLRKQKISWQKIKVICITHLHADHITGLLGIVMLMAQSGDTRKEPLTIIGPIGIKKYLDANIELLRVHKNYDIIYKEIIINKTEPILYEDKKKRIEYIKLKHSIECVGYLFIEKDKPGKFNTQKAESLNIPKGPIRKTLQEGHEVILNGKKILPSEILGESQKGLKFAYITDTAYFEELSTHIKNFNLVIIESTFKNDLKDEAKKKLHLTAKLAAKITKKANVYQTGLIHFSERYTLNKDLCELLDEAQQEYPNGEIFLTKDGMRLKANKDKFIIK.

7 residues coordinate Zn(2+): His62, His64, Asp66, His67, His145, Asp215, and His273. Asp66 functions as the Proton acceptor in the catalytic mechanism.

Belongs to the RNase Z family. As to quaternary structure, homodimer. Zn(2+) serves as cofactor.

It catalyses the reaction Endonucleolytic cleavage of RNA, removing extra 3' nucleotides from tRNA precursor, generating 3' termini of tRNAs. A 3'-hydroxy group is left at the tRNA terminus and a 5'-phosphoryl group is left at the trailer molecule.. Functionally, zinc phosphodiesterase, which displays some tRNA 3'-processing endonuclease activity. Probably involved in tRNA maturation, by removing a 3'-trailer from precursor tRNA. This chain is Ribonuclease Z, found in Borrelia hermsii (strain HS1 / DAH).